A 359-amino-acid polypeptide reads, in one-letter code: Probable L-ascorbate peroxidase 7, chloroplastic (359 aa).

The transit peptide at Met-1–Met-71 directs the protein to the chloroplast. The Proton acceptor role is filled by His-118. His-247 serves as a coordination point for heme b. Position 248 (Thr-248) interacts with K(+). The interval Arg-251–Gln-277 is disordered. The span at Ser-252–Tyr-266 shows a compositional bias: basic and acidic residues. 2 residues coordinate K(+): Thr-280 and Asp-287.

The protein belongs to the peroxidase family. Ascorbate peroxidase subfamily. Requires heme b as cofactor. As to expression, expressed in roots, leaves, stems and flowers.

The protein localises to the plastid. It is found in the chloroplast stroma. It catalyses the reaction L-ascorbate + H2O2 = L-dehydroascorbate + 2 H2O. Its function is as follows. Plays a key role in hydrogen peroxide removal. The protein is Probable L-ascorbate peroxidase 7, chloroplastic of Oryza sativa subsp. japonica (Rice).